The chain runs to 661 residues: Meiotic coiled-coil protein 1 (661 aa).

Coiled-coil stretches lie at residues 38–78 (LDAL…IIEE), 100–121 (RAIY…ERLS), 143–184 (DIKL…LSIK), 304–320 (ELIQ…EVDL), and 360–387 (LKRL…DNEK). Disordered stretches follow at residues 410-446 (QNQE…LRNI), 467-562 (LIDR…TPAS), and 573-592 (LSRT…TPTQ). The span at 414–430 (NISSNDNSKSSPESSPP) shows a compositional bias: low complexity. A compositionally biased stretch (basic and acidic residues) spans 436 to 445 (GKIENKKLRN). Polar residues-rich tracts occupy residues 472–481 (VNQSPDTRSV), 548–562 (HNSV…TPAS), and 582–592 (FTNSLDDTPTQ).

This chain is Meiotic coiled-coil protein 1 (mcp1), found in Schizosaccharomyces pombe (strain 972 / ATCC 24843) (Fission yeast).